We begin with the raw amino-acid sequence, 191 residues long: Protein Ves (191 aa).

Belongs to the Ves family.

This chain is Protein Ves, found in Shigella flexneri.